A 656-amino-acid polypeptide reads, in one-letter code: Probable serine/threonine-protein kinase sky1 (656 aa).

The tract at residues 1-127 (MSDIQQDSTS…KQGGYHPVRR (127 aa)) is disordered. Residues 16 to 48 (TSLGGTSLGGTSLGGTSLGGTSLGGTSLGGTSL) show a composition bias toward gly residues. Low complexity-rich tracts occupy residues 49–64 (GGSTTTSTTTPKSTNS) and 72–89 (TSSNNNNNNNNNNNNNNE). Positions 96–108 (AGSSNKSFMPLNN) are enriched in polar residues. A Protein kinase domain is found at 135 to 648 (YQVVDKLGWG…AKDCLNHTWL (514 aa)). 141–149 (LGWGHFSTV) is a binding site for ATP. A disordered region spans residues 157–185 (TPITTSSSSSSTTTTTTSSSSNGNGNGNG). A compositionally biased stretch (low complexity) spans 160–179 (TTSSSSSSTTTTTTSSSSNG). Residue Lys-197 participates in ATP binding. The active-site Proton acceptor is Asp-298. The disordered stretch occupies residues 330 to 454 (RTSSSNKQSQ…TTATATATTT (125 aa)). Over residues 332–355 (SSSNKQSQQQQQPQQQQSQQNIND) the composition is skewed to low complexity. Basic and acidic residues-rich tracts occupy residues 383–401 (SNRDRDNNKNKNIKKDDNK) and 413–440 (ENTDNKDLNSSEENKKEEEQQQNKKEEP). Positions 441-454 (TTTTTTATATATTT) are enriched in low complexity.

This sequence belongs to the protein kinase superfamily. CMGC Ser/Thr protein kinase family.

The enzyme catalyses L-seryl-[protein] + ATP = O-phospho-L-seryl-[protein] + ADP + H(+). The catalysed reaction is L-threonyl-[protein] + ATP = O-phospho-L-threonyl-[protein] + ADP + H(+). The chain is Probable serine/threonine-protein kinase sky1 (sky1) from Dictyostelium discoideum (Social amoeba).